The chain runs to 151 residues: Small ribosomal subunit protein uS15 (151 aa).

Belongs to the universal ribosomal protein uS15 family.

This is Small ribosomal subunit protein uS15 (RPS13) from Agaricus bisporus (White button mushroom).